The sequence spans 484 residues: Poly(A) polymerase alpha-B (484 aa).

The Nuclear localization signal 1 motif lies at 240-257; it reads RKQLHQLLPSHVLPKKKK. Disordered regions lie at residues 276–314, 326–356, and 375–484; these read SVDS…PVSL, VPQN…SSTP, and KPVT…RLNR. The Nuclear localization signal 2 signature appears at 392–407; the sequence is KRTSSPTNEESPKKTK. Residues 423–441 are compositionally biased toward basic and acidic residues; it reads EQNKLEPEELKEVHSEEKS. Low complexity predominate over residues 451-464; the sequence is SSQRSSSTDLSDIS.

The protein belongs to the poly(A) polymerase family. Monomer.

The protein resides in the nucleus. The enzyme catalyses RNA(n) + ATP = RNA(n)-3'-adenine ribonucleotide + diphosphate. In terms of biological role, polymerase that creates the 3'-poly(A) tail of mRNA's. May acquire specificity through interaction with a cleavage and polyadenylation factor (CPSF). The chain is Poly(A) polymerase alpha-B (papola-b) from Xenopus laevis (African clawed frog).